The primary structure comprises 363 residues: Aminomethyltransferase (363 aa).

This sequence belongs to the GcvT family. In terms of assembly, the glycine cleavage system is composed of four proteins: P, T, L and H.

The catalysed reaction is N(6)-[(R)-S(8)-aminomethyldihydrolipoyl]-L-lysyl-[protein] + (6S)-5,6,7,8-tetrahydrofolate = N(6)-[(R)-dihydrolipoyl]-L-lysyl-[protein] + (6R)-5,10-methylene-5,6,7,8-tetrahydrofolate + NH4(+). In terms of biological role, the glycine cleavage system catalyzes the degradation of glycine. The chain is Aminomethyltransferase from Staphylococcus aureus (strain MRSA252).